The following is a 460-amino-acid chain: Transcription factor AP-2-beta (460 aa).

Residue K21 forms a Glycyl lysine isopeptide (Lys-Gly) (interchain with G-Cter in SUMO) linkage. Residues 30–139 (HDGVPSHSSR…PQLSGLDPRR (110 aa)) form a disordered region. Residues 35-51 (SHSSRLSQLGSVSQGPY) are compositionally biased toward polar residues. Positions 121-132 (LLPQPRAALPQL) are enriched in low complexity. S258 is modified (phosphoserine; by PKA). Residues 435–460 (NTTTNRHTSGEGPGSKTGDKEEKHRK) form a disordered region. Over residues 451-460 (TGDKEEKHRK) the composition is skewed to basic and acidic residues.

The protein belongs to the AP-2 family. As to quaternary structure, binds DNA as a dimer. Can form homodimers or heterodimers with other AP-2 family members. Interacts with CITED4. Interacts with UBE2I. Interacts with KCTD1; this interaction represses transcription activation. Interacts with CITED2 (via C-terminus); the interaction stimulates TFAP2B-transcriptional activity. Sumoylated on Lys-21; which inhibits transcriptional activity.

The protein resides in the nucleus. In terms of biological role, sequence-specific DNA-binding protein that interacts with inducible viral and cellular enhancer elements to regulate transcription of selected genes. AP-2 factors bind to the consensus sequence 5'-GCCNNNGGC-3' and activate genes involved in a large spectrum of important biological functions including proper eye, face, body wall, limb and neural tube development. They also suppress a number of genes including MCAM/MUC18, C/EBP alpha and MYC. AP-2-beta appears to be required for normal face and limb development and for proper terminal differentiation and function of renal tubular epithelia. In Canis lupus familiaris (Dog), this protein is Transcription factor AP-2-beta (TFAP2B).